Here is a 48-residue protein sequence, read N- to C-terminus: Cuticle protein 10 (48 aa).

The sequence is that of Cuticle protein 10 from Limulus polyphemus (Atlantic horseshoe crab).